The following is a 334-amino-acid chain: S-adenosylmethionine:tRNA ribosyltransferase-isomerase (334 aa).

Belongs to the QueA family. Monomer.

It localises to the cytoplasm. The enzyme catalyses 7-aminomethyl-7-carbaguanosine(34) in tRNA + S-adenosyl-L-methionine = epoxyqueuosine(34) in tRNA + adenine + L-methionine + 2 H(+). It participates in tRNA modification; tRNA-queuosine biosynthesis. In terms of biological role, transfers and isomerizes the ribose moiety from AdoMet to the 7-aminomethyl group of 7-deazaguanine (preQ1-tRNA) to give epoxyqueuosine (oQ-tRNA). The protein is S-adenosylmethionine:tRNA ribosyltransferase-isomerase of Aquifex aeolicus (strain VF5).